Consider the following 147-residue polypeptide: MTLRLNDLKPADGARTERTRVGRGIGSGLGKTAGRGHKGSFARKGGGKIKAGFEGGQTPMQRRLPKIGFRSKMARDTAEVLSYQLDKLDAGDVDFAALRAANLVPSRAKKAKIVLKGELSKKFVLKGVAATAGAKAAIEAAGGSVEE.

The segment covering 1-20 (MTLRLNDLKPADGARTERTR) has biased composition (basic and acidic residues). Residues 1-61 (MTLRLNDLKP…GFEGGQTPMQ (61 aa)) are disordered. The span at 23–33 (RGIGSGLGKTA) shows a compositional bias: gly residues. Positions 34 to 47 (GRGHKGSFARKGGG) are enriched in basic residues.

This sequence belongs to the universal ribosomal protein uL15 family. In terms of assembly, part of the 50S ribosomal subunit.

Its function is as follows. Binds to the 23S rRNA. The chain is Large ribosomal subunit protein uL15 from Xanthomonas axonopodis pv. citri (strain 306).